A 186-amino-acid chain; its full sequence is GTP cyclohydrolase 1 2 (186 aa).

Belongs to the GTP cyclohydrolase I family. In terms of assembly, homomer.

The enzyme catalyses GTP + H2O = 7,8-dihydroneopterin 3'-triphosphate + formate + H(+). It participates in cofactor biosynthesis; 7,8-dihydroneopterin triphosphate biosynthesis; 7,8-dihydroneopterin triphosphate from GTP: step 1/1. The protein is GTP cyclohydrolase 1 2 of Pseudomonas putida (strain ATCC 47054 / DSM 6125 / CFBP 8728 / NCIMB 11950 / KT2440).